We begin with the raw amino-acid sequence, 3423 residues long: Genome polyprotein (3423 aa).

The segment at 1 to 25 (MKNPKKKSGGFRIVNMLKRGVARVS) is disordered. Residues 1–104 (MKNPKKKSGG…INARKEKKRR (104 aa)) lie on the Cytoplasmic side of the membrane. Residues 37 to 72 (LLLGHGPIRMVLAILAFLRFTAIKPSLGLINRWGSV) form a hydrophobic; homodimerization of capsid protein C region. A propeptide spans 105–122 (GADTSVGIVGLLLTTAMA) (ER anchor for capsid protein C, removed in mature form by serine protease NS3). The chain crosses the membrane as a helical span at residues 105 to 125 (GADTSVGIVGLLLTTAMAAEV). Topologically, residues 126–249 (TRRGSAYYMY…YTKHLIRVEN (124 aa)) are extracellular. Residue Asn-192 is glycosylated (N-linked (GlcNAc...) asparagine; by host). The helical transmembrane segment at 250–269 (WIFRNPGFALAAAAIAWLLG) threads the bilayer. The Cytoplasmic segment spans residues 270–274 (SSTSQ). A helical membrane pass occupies residues 275–290 (KVIYLVMILLIAPAYS). Topologically, residues 291-745 (IRCIGVSNRD…HQIFGAAFKS (455 aa)) are extracellular. Residue Lys-328 forms a Glycyl lysine isopeptide (Lys-Gly) (interchain with G-Cter in ubiquitin) linkage. Disulfide bonds link Cys-350–Cys-406 and Cys-382–Cys-411. Residues 388 to 401 (DRGWGNGCGLFGKG) form a fusion peptide region. Residue Asn-444 is glycosylated (N-linked (GlcNAc...) asparagine; by host). Disulfide bonds link Cys-480-Cys-581 and Cys-598-Cys-629. Lys-571 is covalently cross-linked (Glycyl lysine isopeptide (Lys-Gly) (interchain with G-Cter in ubiquitin)). A helical membrane pass occupies residues 746-767 (LFGGMSWFSQILIGTLLMWLGL). At 768–773 (NTKNGS) the chain is on the cytoplasmic side. The helical transmembrane segment at 774 to 794 (ISLMCLALGGVLIFLSTAVSA) threads the bilayer. The Lumenal portion of the chain corresponds to 795–1177 (DVGCSVDFSK…EGLKKRMTTK (383 aa)). Cystine bridges form between Cys-798/Cys-809, Cys-849/Cys-937, Cys-973/Cys-1017, Cys-1074/Cys-1123, Cys-1085/Cys-1106, and Cys-1107/Cys-1110. N-linked (GlcNAc...) asparagine; by host glycans are attached at residues Asn-924 and Asn-1001. Residues 1178–1198 (IIISTSMAVLVAMILGGFSMS) traverse the membrane as a helical segment. Topologically, residues 1199–1220 (DLAKLAILMGATFAEMNTGGDV) are cytoplasmic. Residues 1221-1241 (AHLALIAAFKVRPALLVSFIF) form a helical membrane-spanning segment. Residues 1242 to 1270 (RANWTPRESMLLALASCLLQTAISALEGD) lie on the Lumenal side of the membrane. A helical membrane pass occupies residues 1271–1291 (LMVLINGFALAWLAIRAMVVP). The Cytoplasmic portion of the chain corresponds to 1292–1295 (RTDN). Residues 1296-1316 (ITLAILAALTPLARGTLLVAW) traverse the membrane as a helical segment. At 1317–1345 (RAGLATCGGFMLLSLKGKGSVKKNLPFVM) the chain is on the lumenal side. Residues 1346–1366 (ALGLTAVRLVDPINVVGLLLL) form a helical membrane-spanning segment. The Cytoplasmic segment spans residues 1367-1373 (TRSGKRS). The helical transmembrane segment at 1374–1394 (WPPSEVLTAVGLICALAGGFA) threads the bilayer. Topologically, residues 1395 to 1397 (KAD) are lumenal. A helical transmembrane segment spans residues 1398–1418 (IEMAGPMAAVGLLIVSYVVSG). Residues 1419 to 1472 (KSVDMYIERAGDITWEKDAEVTGNSPRLDVALDESGDFSLVEDDGPPMREIILK) are Cytoplasmic-facing. The interacts with and activates NS3 protease stretch occupies residues 1425–1464 (IERAGDITWEKDAEVTGNSPRLDVALDESGDFSLVEDDGP). Positions 1429 to 1451 (GDITWEKDAEVTGNSPRLDVALD) are disordered. Residues 1473–1493 (VVLMTICGMNPIAIPFAAGAW) constitute an intramembrane region (helical). The Lumenal portion of the chain corresponds to 1494–2170 (YVYVKTGKRS…KAAAAQLPET (677 aa)). Residues 1503-1680 (SGALWDVPAP…RREEETPVEC (178 aa)) enclose the Peptidase S7 domain. Residues His-1553, Asp-1577, and Ser-1637 each act as charge relay system; for serine protease NS3 activity in the active site. Residues 1683–1839 (PSMLKKKQLT…DSNSPIMDTE (157 aa)) enclose the Helicase ATP-binding domain. The interval 1687 to 1690 (KKKQ) is important for RNA-binding. 1696–1703 (LHPGAGKT) is an ATP binding site. Positions 1787–1790 (DEAH) match the DEAH box motif. Residues 1834–2013 (PIMDTEVEVP…GLIASLYRPE (180 aa)) enclose the Helicase C-terminal domain. At Lys-1891 the chain carries N6-acetyllysine; by host. A helical transmembrane segment spans residues 2171–2191 (LETIMLLGLLGTVSLGIFFVL). Residues 2192–2195 (MRNK) are Lumenal-facing. Residues 2196 to 2216 (GIGKMGFGMVTLGASAWLMWL) constitute an intramembrane region (helical). Over 2217 to 2218 (SE) the chain is Cytoplasmic. Residues 2219 to 2239 (IEPARIACVLIVVFLLLVVLI) form a helical membrane-spanning segment. The Lumenal segment spans residues 2240-2254 (PEPEKQRSPQDNQMA). The helical intramembrane region spans 2255–2269 (IIIMVAVGLLGLITA). The Lumenal segment spans residues 2270–2307 (NELGWLERTKSDLSHLMGRREEGATIGFSMDIDLRPAS). The segment at residues 2308–2328 (AWAIYAALTTFITPAVQHAVT) is an intramembrane region (helical). At 2329 to 2344 (TSYNNYSLMAMATQAG) the chain is on the lumenal side. A helical membrane pass occupies residues 2345 to 2365 (VLFGMGKGMPFYAWDFGVPLL). Over 2366 to 2375 (MIGCYSQLTP) the chain is Cytoplasmic. A helical membrane pass occupies residues 2376–2396 (LTLIVAIILLVAHYMYLIPGL). Over 2397-2441 (QAAAARAAQKRTAAGIMKNPVVDGIVVTDIDTMTIDPQVEKKMGQ) the chain is Lumenal. Residues 2442 to 2462 (VLLIAVAVSSAILSRTAWGWG) traverse the membrane as a helical segment. The Cytoplasmic portion of the chain corresponds to 2463–3423 (EAGALITAAT…GEEGSTPGVL (961 aa)). In terms of domain architecture, mRNA cap 0-1 NS5-type MT spans 2521-2785 (GGGTGETLGE…DVNLGSGTRA (265 aa)). Residue 2533–2539 (KARLNQM) coordinates GTP. An S-adenosyl-L-methionine-binding site is contributed by Ser-2576. At Ser-2576 the chain carries Phosphoserine. Catalysis depends on Lys-2581, which acts as the For 2'-O-MTase activity. Positions 2597–2600 (VIDL) are SUMO-interacting motif (SIM). The S-adenosyl-L-methionine site is built by Gly-2606, Trp-2607, Thr-2624, Lys-2625, His-2630, Glu-2631, Asp-2651, Val-2652, Asp-2666, and Ile-2667. Asp-2666 functions as the For 2'-O-MTase activity in the catalytic mechanism. Residue 2669–2675 (ESSSSPE) participates in GTP binding. Catalysis depends on Lys-2702, which acts as the For 2'-O-MTase activity. 2733 to 2735 (RNS) serves as a coordination point for GTP. The active-site For 2'-O-MTase activity is the Glu-2738. Tyr-2740 lines the S-adenosyl-L-methionine pocket. The Nuclear localization signal (NLS) signature appears at 2908–2914 (KHKRPRV). Positions 2959, 2963, 2968, and 2971 each coordinate Zn(2+). The 151-residue stretch at 3049 to 3199 (GRMYADDTAG…KPIDDRFAHA (151 aa)) folds into the RdRp catalytic domain. Zn(2+) is bound by residues His-3234, Cys-3250, and Cys-3369.

This sequence in the N-terminal section; belongs to the class I-like SAM-binding methyltransferase superfamily. mRNA cap 0-1 NS5-type methyltransferase family. As to quaternary structure, homodimer. Interacts with host SERTAD3; this interaction promotes capsid protein C degradation. Interacts with host CAPRIN1; this interaction is probably linked to the inhibition of stress granules formation by the virus. Interacts with host G3BP1; this interaction is probably linked to the inhibition of stress granules formation by the virus. In terms of assembly, forms heterodimers with envelope protein E in the endoplasmic reticulum and Golgi. Interacts with non-structural protein 2A. Homodimer; in the endoplasmic reticulum and Golgi. Interacts with host TYRO3, AXL and DC-SIGN proteins. Interacts with non-structural protein 2A. Interacts with host HAVCR1; this interaction likely mediates virus attachment to host cell. Interacts with host NCAM1. Interacts with host HSPA5. Interacts with Aedes aegypti SRPN25, APY and venom allergen-1 salivary proteins; the interactions do not affect Zika virus replication in human endothelial cells and keratinocytes. As to quaternary structure, homodimer; Homohexamer when secreted. Interacts with host TBK1. Interacts with host USP8. Interacts with envelope protein E. In terms of assembly, interacts with the structural protein prM/E complex, and the NS2B/NS3 protease complex. Forms a heterodimer with serine protease NS3. May form homooligomers. Interacts with human SPCS1. Interacts with non-structural protein 2A. As to quaternary structure, forms a heterodimer with NS2B. Interacts with NS4B. Interacts with unphosphorylated RNA-directed RNA polymerase NS5; this interaction stimulates RNA-directed RNA polymerase NS5 guanylyltransferase activity. Interacts with non-structural protein 2A. Interacts with host SHFL; this interaction promotes NS3 degradation via a lysosome-dependent pathway. Interacts with host CEP63; this interaction disorganizes the centrosome and inhibits host innate immune response. In terms of assembly, may interact with host ANKLE2; the interaction may cause defects in brain development, such as microcephaly. May interact with host SRPRA and SEC61G. Interacts with serine protease NS3. Interacts with NS1. As to quaternary structure, homodimer; dimerization may negatively regulate the GTase activity, a crucial step in the capping process. Interacts with host STAT2; this interaction inhibits the phosphorylation of the latter, and, when all viral proteins are present (polyprotein), targets STAT2 for degradation. Interacts with host TBK1 and IKBKE; these interactions lead to the inhibition of the host RIG-I signaling pathway. Interacts with host PAF1 complex; the interaction may prevent the recruitment of the host PAF1 complex to interferon-responsive genes, and thus reduces the immune response. Interacts with serine protease NS3. Interacts with host KPNA2. Interacts with host ZSWIM8; this interaction allows STAT2 binding to ZSWIM8 and subsequent proteasomal degradation leading to inhibition of interferon signaling. In terms of processing, specific enzymatic cleavages in vivo yield mature proteins. Cleavages in the lumen of endoplasmic reticulum are performed by host signal peptidase, whereas cleavages in the cytoplasmic side are performed by serine protease NS3. Signal cleavage at the 2K-4B site requires a prior NS3 protease-mediated cleavage at the 4A-2K site. Post-translationally, cleaved in post-Golgi vesicles by a host furin, releasing the mature small envelope protein M, and peptide pr. This cleavage is incomplete as up to 30% of viral particles still carry uncleaved prM. N-glycosylation plays a role in virulence in mammalian and mosquito hosts, but may have no effect on neurovirulence. In terms of processing, ubiquitination by host TRIM7 promotes virus attachment and fusion of the virus and the host endosome membrane. Post-translationally, N-glycosylated. The excreted form is glycosylated, which is required for efficient secretion of the protein from infected cells. Ubiquitination by host TRIM22 leads to proteasomal degradation. In terms of processing, acetylated by host KAT5. Acetylation modulates NS3 RNA-binding and unwinding activities and plays an important positive role for viral replication. Post-translationally, phosphorylated on serines residues. This phosphorylation may trigger NS5 nuclear localization. Sumoylated, required for regulating IFN induced interferon stimulated genes/ISGs.

The protein localises to the virion. It is found in the host nucleus. Its subcellular location is the host cytoplasm. The protein resides in the host perinuclear region. It localises to the secreted. The protein localises to the virion membrane. It is found in the host endoplasmic reticulum membrane. The enzyme catalyses a 5'-end (5'-triphosphoguanosine)-ribonucleoside in mRNA + S-adenosyl-L-methionine = a 5'-end (N(7)-methyl 5'-triphosphoguanosine)-ribonucleoside in mRNA + S-adenosyl-L-homocysteine. It carries out the reaction a 5'-end (N(7)-methyl 5'-triphosphoguanosine)-ribonucleoside in mRNA + S-adenosyl-L-methionine = a 5'-end (N(7)-methyl 5'-triphosphoguanosine)-(2'-O-methyl-ribonucleoside) in mRNA + S-adenosyl-L-homocysteine + H(+). The catalysed reaction is RNA(n) + a ribonucleoside 5'-triphosphate = RNA(n+1) + diphosphate. It catalyses the reaction Selective hydrolysis of -Xaa-Xaa-|-Yaa- bonds in which each of the Xaa can be either Arg or Lys and Yaa can be either Ser or Ala.. The enzyme catalyses a ribonucleoside 5'-triphosphate + H2O = a ribonucleoside 5'-diphosphate + phosphate + H(+). It carries out the reaction ATP + H2O = ADP + phosphate + H(+). In terms of biological role, plays a role in virus budding by binding to the cell membrane and gathering the viral RNA into a nucleocapsid that forms the core of the mature virus particle. During virus entry, may induce genome penetration into the host cytoplasm after hemifusion induced by the surface proteins. Can migrate to the cell nucleus where it modulates host functions. Inhibits the integrated stress response (ISR) in the infected cell. Functionally, inhibits RNA silencing by interfering with host Dicer. Its function is as follows. Prevents premature fusion activity of envelope proteins in trans-Golgi by binding to envelope protein E at pH 6.0. After virion release in extracellular space, gets dissociated from E dimers. Plays a role in host immune defense modulation and protection of envelope protein E during virion synthesis. PrM-E cleavage is inefficient, many virions are only partially matured and immature prM-E proteins could play a role in immune evasion. Contributes to fetal microcephaly in humans. Acts as a chaperone for envelope protein E during intracellular virion assembly by masking and inactivating envelope protein E fusion peptide. prM is the only viral peptide matured by host furin in the trans-Golgi network probably to avoid catastrophic activation of the viral fusion activity in acidic Golgi compartment prior to virion release. In terms of biological role, may play a role in virus budding. Exerts cytotoxic effects by activating a mitochondrial apoptotic pathway through M ectodomain. May display a viroporin activity. Functionally, binds to host cell surface receptors and mediates fusion between viral and cellular membranes. Efficient virus attachment to cell is, at least in part, mediated by host HAVCR1 in a cell-type specific manner. In addition, host NCAM1 can also be used as entry receptor. Interaction with host HSPA5 plays an important role in the early stages of infection as well. Envelope protein is synthesized in the endoplasmic reticulum and forms a heterodimer with protein prM. The heterodimer plays a role in virion budding in the ER, and the newly formed immature particle is covered with 60 spikes composed of heterodimers between precursor prM and envelope protein E. The virion is transported to the Golgi apparatus where the low pH causes the dissociation of PrM-E heterodimers and formation of E homodimers. PrM-E cleavage is inefficient, many virions are only partially matured and immature prM-E proteins could play a role in immune evasion. Its function is as follows. Plays a role in the inhibition of host RLR-induced interferon-beta activation by targeting TANK-binding kinase 1/TBK1. In addition, recruits the host deubiquitinase USP8 to cleave 'Lys-11'-linked polyubiquitin chains from caspase-1/CASP1 thus inhibiting its proteasomal degradation. In turn, stabilized CASP1 promotes cleavage of cGAS, which inhibits its ability to recognize mitochondrial DNA release and initiate type I interferon signaling. Component of the viral RNA replication complex that recruits genomic RNA, the structural protein prM/E complex, and the NS2B/NS3 protease complex to the virion assembly site and orchestrates virus morphogenesis. Antagonizes also the host MDA5-mediated induction of alpha/beta interferon antiviral response. May disrupt adherens junction formation and thereby impair proliferation of radial cells in the host cortex. In terms of biological role, required cofactor for the serine protease function of NS3. Functionally, displays three enzymatic activities: serine protease, NTPase and RNA helicase. NS3 serine protease, in association with NS2B, performs its autocleavage and cleaves the polyprotein at dibasic sites in the cytoplasm: C-prM, NS2A-NS2B, NS2B-NS3, NS3-NS4A, NS4A-2K and NS4B-NS5. NS3 RNA helicase binds RNA and unwinds dsRNA in the 3' to 5' direction. Inhibits the integrated stress response (ISR) in the infected cell by blocking stress granules assembly. Disrupts host centrosome organization in a CEP63-dependent manner to degrade host TBK1 and inhibits innate immune response. Its function is as follows. Regulates the ATPase activity of the NS3 helicase activity. NS4A allows NS3 helicase to conserve energy during unwinding. Cooperatively with NS4B suppresses the Akt-mTOR pathway and leads to cellular dysregulation. By inhibiting host ANKLE2 functions, may cause defects in brain development, such as microcephaly. Also antagonizes the host MDA5-mediated induction of alpha/beta interferon antiviral response. Inhibits the integrated stress response (ISR) in the infected cell by blocking stress granules assembly. Functions as a signal peptide for NS4B and is required for the interferon antagonism activity of the latter. In terms of biological role, induces the formation of ER-derived membrane vesicles where the viral replication takes place. Also plays a role in the inhibition of host RLR-induced interferon-beta production at TANK-binding kinase 1/TBK1 level. Cooperatively with NS4A suppresses the Akt-mTOR pathway and leads to cellular dysregulation. Functionally, replicates the viral (+) and (-) RNA genome, and performs the capping of genomes in the cytoplasm. Methylates viral RNA cap at guanine N-7 and ribose 2'-O positions. Once sufficient NS5 is expressed, binds to the cap-proximal structure and inhibits further translation of the viral genome. Besides its role in RNA genome replication, also prevents the establishment of a cellular antiviral state by blocking the interferon-alpha/beta (IFN-alpha/beta) signaling pathway. Mechanistically, interferes with host kinases TBK1 and IKKE upstream of interferon regulatory factor 3/IRF3 to inhibit the RIG-I pathway. Also antagonizes type I interferon signaling by targeting STAT2 for degradation by the proteasome thereby preventing activation of JAK-STAT signaling pathway. Mechanistically, acts as a scaffold protein to connect host ZSWIM8/CUL3 ligase complex and STAT2, leading to STAT2 degradation. Within the host nucleus, disrupts host SUMO1 and STAT2 co-localization with PML, resulting in PML degradation. May also reduce immune responses by preventing the recruitment of the host PAF1 complex to interferon-responsive genes. The protein is Genome polyprotein of Zika virus (isolate ZIKV/Human/French Polynesia/10087PF/2013) (ZIKV).